The chain runs to 259 residues: Thiazole synthase (259 aa).

Residue lysine 95 is the Schiff-base intermediate with DXP of the active site. 1-deoxy-D-xylulose 5-phosphate contacts are provided by residues glycine 156, 183-184, and 205-206; these read AG and NS.

Belongs to the ThiG family. As to quaternary structure, homotetramer. Forms heterodimers with either ThiH or ThiS.

It localises to the cytoplasm. The catalysed reaction is [ThiS sulfur-carrier protein]-C-terminal-Gly-aminoethanethioate + 2-iminoacetate + 1-deoxy-D-xylulose 5-phosphate = [ThiS sulfur-carrier protein]-C-terminal Gly-Gly + 2-[(2R,5Z)-2-carboxy-4-methylthiazol-5(2H)-ylidene]ethyl phosphate + 2 H2O + H(+). The protein operates within cofactor biosynthesis; thiamine diphosphate biosynthesis. Catalyzes the rearrangement of 1-deoxy-D-xylulose 5-phosphate (DXP) to produce the thiazole phosphate moiety of thiamine. Sulfur is provided by the thiocarboxylate moiety of the carrier protein ThiS. In vitro, sulfur can be provided by H(2)S. The sequence is that of Thiazole synthase from Coxiella burnetii (strain CbuK_Q154) (Coxiella burnetii (strain Q154)).